Here is a 211-residue protein sequence, read N- to C-terminus: Soluble inorganic pyrophosphatase PPA1 (211 aa).

Residues Lys-61 and Arg-75 each contribute to the substrate site. The active-site Proton donor is Tyr-83. Tyr-87 provides a ligand contact to substrate. Residues Asp-97, Asp-102, and Asp-134 each contribute to the Mg(2+) site. Tyr-171 contacts substrate.

It belongs to the PPase family. It depends on Mg(2+) as a cofactor.

The protein resides in the cytoplasm. The catalysed reaction is diphosphate + H2O = 2 phosphate + H(+). With respect to regulation, strongly inhibited by Ca(2+). In terms of biological role, catalyzes the irreversible hydrolysis of pyrophosphate (PPi) to phosphate. The sequence is that of Soluble inorganic pyrophosphatase PPA1 from Solanum tuberosum (Potato).